Here is a 65-residue protein sequence, read N- to C-terminus: Small ribosomal subunit protein bS21 (65 aa).

The protein belongs to the bacterial ribosomal protein bS21 family.

The sequence is that of Small ribosomal subunit protein bS21 from Acidobacterium capsulatum (strain ATCC 51196 / DSM 11244 / BCRC 80197 / JCM 7670 / NBRC 15755 / NCIMB 13165 / 161).